A 414-amino-acid chain; its full sequence is WW domain-containing oxidoreductase (414 aa).

Positions 1–23 are disordered; sequence MAALRYAGLDDTDSEDELPPGWE. Position 12 is a phosphothreonine (T12). S14 bears the Phosphoserine mark. Residues 16–49 form the WW 1 domain; the sequence is DELPPGWEERTTKDGWVYYANHTEEKTQWEHPKT. Y33 is modified (phosphotyrosine). Positions 50 to 55 match the Nuclear localization signal motif; sequence GKRKRV. Residues 57 to 90 form the WW 2 domain; it reads GDLPYGWEQETDENGQVFFVDHINKRTTYLDPRL. The segment at 125–414 is interaction with MAPT; it reads KVVVVTGANS…IQERLGSQSG (290 aa). 131–137 contacts NADP(+); the sequence is GANSGIG. Residues 209-273 are mediates targeting to the mitochondria; the sequence is CNAATFALPW…RFTDINDSLG (65 aa). Position 260 (S260) interacts with substrate. At Y287 the chain carries Phosphotyrosine; by TNK2. Y293 serves as the catalytic Proton acceptor.

This sequence belongs to the short-chain dehydrogenases/reductases (SDR) family. As to quaternary structure, interacts with TP53, p73/TP73 and MAPK8. Interacts with MAPT/TAU, RUNX2 and HYAL2. Forms a ternary complex with TP53 and MDM2. Interacts with ERBB4, LITAF and WBP1. Interacts with DVL1, DVL2 and DVL3. May interact with FAM189B and SCOTIN. Interacts with TNK2. Interacts with TMEM207. Interacts (via WW domain) with VOPP1. In terms of processing, phosphorylated upon genotoxic stress. Phosphorylation of Tyr-33 regulates interaction with TP53, TP73 and MAPK8. May also regulate proapoptotic activity. Phosphorylation by TNK2 is associated with polyubiquitination and degradation. Ubiquitinated when phosphorylated by TNK2, leading to its degradation. As to expression, widely expressed. Strongly expressed in testis, prostate, and ovary. Overexpressed in cancer cell lines. Isoform 5 and isoform 6 may only be expressed in tumor cell lines.

The protein localises to the cytoplasm. Its subcellular location is the nucleus. The protein resides in the mitochondrion. It is found in the golgi apparatus. It localises to the lysosome. In terms of biological role, putative oxidoreductase. Acts as a tumor suppressor and plays a role in apoptosis. Required for normal bone development. May function synergistically with p53/TP53 to control genotoxic stress-induced cell death. Plays a role in TGFB1 signaling and TGFB1-mediated cell death. May also play a role in tumor necrosis factor (TNF)-mediated cell death. Inhibits Wnt signaling, probably by sequestering DVL2 in the cytoplasm. In Homo sapiens (Human), this protein is WW domain-containing oxidoreductase (WWOX).